Here is a 167-residue protein sequence, read N- to C-terminus: Peptide deformylase (167 aa).

Fe cation is bound by residues cysteine 91 and histidine 133. Residue glutamate 134 is part of the active site. Residue histidine 137 coordinates Fe cation.

Belongs to the polypeptide deformylase family. Fe(2+) is required as a cofactor.

The catalysed reaction is N-terminal N-formyl-L-methionyl-[peptide] + H2O = N-terminal L-methionyl-[peptide] + formate. Removes the formyl group from the N-terminal Met of newly synthesized proteins. Requires at least a dipeptide for an efficient rate of reaction. N-terminal L-methionine is a prerequisite for activity but the enzyme has broad specificity at other positions. The chain is Peptide deformylase from Chromobacterium violaceum (strain ATCC 12472 / DSM 30191 / JCM 1249 / CCUG 213 / NBRC 12614 / NCIMB 9131 / NCTC 9757 / MK).